The sequence spans 388 residues: Lipoyl synthase, mitochondrial (388 aa).

The N-terminal 18 residues, Met1–Val18, are a transit peptide targeting the mitochondrion. Residues Ser22–Gly39 show a composition bias toward low complexity. Positions Ser22–Arg43 are disordered. Positions 120, 125, 131, 151, 155, 158, and 366 each coordinate [4Fe-4S] cluster. A Radical SAM core domain is found at Gly134–Leu355.

This sequence belongs to the radical SAM superfamily. Lipoyl synthase family. [4Fe-4S] cluster is required as a cofactor.

Its subcellular location is the mitochondrion. The catalysed reaction is [[Fe-S] cluster scaffold protein carrying a second [4Fe-4S](2+) cluster] + N(6)-octanoyl-L-lysyl-[protein] + 2 oxidized [2Fe-2S]-[ferredoxin] + 2 S-adenosyl-L-methionine + 4 H(+) = [[Fe-S] cluster scaffold protein] + N(6)-[(R)-dihydrolipoyl]-L-lysyl-[protein] + 4 Fe(3+) + 2 hydrogen sulfide + 2 5'-deoxyadenosine + 2 L-methionine + 2 reduced [2Fe-2S]-[ferredoxin]. Its pathway is protein modification; protein lipoylation via endogenous pathway; protein N(6)-(lipoyl)lysine from octanoyl-[acyl-carrier-protein]: step 2/2. Catalyzes the radical-mediated insertion of two sulfur atoms into the C-6 and C-8 positions of the octanoyl moiety bound to the lipoyl domains of lipoate-dependent enzymes, thereby converting the octanoylated domains into lipoylated derivatives. This is Lipoyl synthase, mitochondrial from Candida glabrata (strain ATCC 2001 / BCRC 20586 / JCM 3761 / NBRC 0622 / NRRL Y-65 / CBS 138) (Yeast).